We begin with the raw amino-acid sequence, 184 residues long: ATP-dependent protease subunit HslV (184 aa).

Thr-12 is a catalytic residue. Residues Ala-166, Cys-169, and Thr-172 each coordinate Na(+).

This sequence belongs to the peptidase T1B family. HslV subfamily. A double ring-shaped homohexamer of HslV is capped on each side by a ring-shaped HslU homohexamer. The assembly of the HslU/HslV complex is dependent on binding of ATP.

The protein resides in the cytoplasm. The enzyme catalyses ATP-dependent cleavage of peptide bonds with broad specificity.. Its activity is regulated as follows. Allosterically activated by HslU binding. Protease subunit of a proteasome-like degradation complex believed to be a general protein degrading machinery. This is ATP-dependent protease subunit HslV from Brucella canis (strain ATCC 23365 / NCTC 10854 / RM-666).